The chain runs to 801 residues: Probable inorganic carbon transporter subunit DabA (801 aa).

Zn(2+)-binding residues include Cys330, Asp332, His489, and Cys504.

Belongs to the inorganic carbon transporter (TC 9.A.2) DabA family. In terms of assembly, forms a complex with DabB. The cofactor is Zn(2+).

It localises to the cell inner membrane. Its function is as follows. Part of an energy-coupled inorganic carbon pump. In Jannaschia sp. (strain CCS1), this protein is Probable inorganic carbon transporter subunit DabA.